The sequence spans 852 residues: Cytochrome P450 monooxygenase mpaDE (852 aa).

At 1–6 the chain is on the lumenal side; sequence MDYLII. A helical transmembrane segment spans residues 7–29; that stretch reads IRITAVAVVLYLTRYVCCLYLHL. At 30 to 852 the chain is on the cytoplasmic side; sequence QDVPGPLFAK…DLEDAMEGTK (823 aa). Cysteine 448 provides a ligand contact to heme.

It belongs to the cytochrome P450 family. Heme serves as cofactor.

Its subcellular location is the endoplasmic reticulum membrane. The enzyme catalyses 5-methylorsellinate + reduced [NADPH--hemoprotein reductase] + O2 = 4,6-dihydroxy-2-(hydroxymethyl)-3-methylbenzoate + oxidized [NADPH--hemoprotein reductase] + H2O + H(+). The catalysed reaction is 4,6-dihydroxy-2-(hydroxymethyl)-3-methylbenzoate + H(+) = 5,7-dihydroxy-4-methylphthalide + H2O. The protein operates within secondary metabolite biosynthesis; terpenoid biosynthesis. Functionally, cytochrome P450 monooxygenase; part of the gene cluster that mediates the biosynthesis of mycophenolic acid (MPA), the first isolated antibiotic natural product in the world obtained from a culture of Penicillium brevicompactum in 1893. MpaDE is an endoplasmic reticulum-bound enzyme that catalyzes the conversion of 5-methylorsellinic acid (5MOA) into the phthalide compound 5,7-dihydroxy-4,6-dimethylphthalide (DHMP). MpaDE first catalyzes hydroxylation of 5-MOA to 4,6-dihydroxy-2-(hydroxymethyl)-3-methylbenzoic acid (DHMB), and then acts as a lactone synthase that catalyzes the ring closure to convert DHMB into DHMP. The first step of the pathway is the synthesis of 5-methylorsellinic acid (5MOA) by the cytosolic polyketide synthase mpaC. 5MOA is then converted to the phthalide compound 5,7-dihydroxy-4,6-dimethylphthalide (DHMP) by the endoplasmic reticulum-bound cytochrome P450 monooxygenase mpaDE. MpaDE first catalyzes hydroxylation of 5-MOA to 4,6-dihydroxy-2-(hydroxymethyl)-3-methylbenzoic acid (DHMB). MpaDE then acts as a lactone synthase that catalyzes the ring closure to convert DHMB into DHMP. The next step is the prenylation of DHMP by the Golgi apparatus-associated prenyltransferase mpaA to yield farnesyl-DHMP (FDHMP). The ER-bound oxygenase mpaB then mediates the oxidative cleavage the C19-C20 double bond in FDHMP to yield FDHMP-3C via a mycophenolic aldehyde intermediate. The O-methyltransferase mpaG catalyzes the methylation of FDHMP-3C to yield MFDHMP-3C. After the cytosolic methylation of FDHMP-3C, MFDHMP-3C enters into peroxisomes probably via free diffusion due to its low molecular weight. Upon a peroxisomal CoA ligation reaction, catalyzed by a beta-oxidation component enzyme acyl-CoA ligase ACL891, MFDHMP-3C-CoA would then be restricted to peroxisomes for the following beta-oxidation pathway steps. The peroxisomal beta-oxidation machinery than converts MFDHMP-3C-CoA into MPA_CoA, via a beta-oxidation chain-shortening process. Finally mpaH acts as a peroxisomal acyl-CoA hydrolase with high substrate specificity toward MPA-CoA to release the final product MPA. This is Cytochrome P450 monooxygenase mpaDE from Penicillium roqueforti (strain FM164).